Consider the following 94-residue polypeptide: Large ribosomal subunit protein bL25 (94 aa).

Belongs to the bacterial ribosomal protein bL25 family. As to quaternary structure, part of the 50S ribosomal subunit; part of the 5S rRNA/L5/L18/L25 subcomplex. Contacts the 5S rRNA. Binds to the 5S rRNA independently of L5 and L18.

This is one of the proteins that binds to the 5S RNA in the ribosome where it forms part of the central protuberance. The chain is Large ribosomal subunit protein bL25 from Salmonella arizonae (strain ATCC BAA-731 / CDC346-86 / RSK2980).